Consider the following 624-residue polypeptide: NADPH-dependent diflavin oxidoreductase 1 (624 aa).

Residues 6–168 form the Flavodoxin-like domain; that stretch reads IVILYGSETG…VYYEFEKRII (163 aa). FMN is bound by residues 12-17, 59-62, 106-115, and E142; these read SETGNA, STTG, and LGDSSYPRFN. The FAD-binding FR-type domain maps to 226–474; the sequence is ETIRHGTVKK…LQNNHLLHED (249 aa). Residues R384, 414–417, and 446–449 contribute to the FAD site; these read RFYS and GLCT. NADP(+) is bound by residues 539–540 and 548–552; these read SR and AKYVQ. Residue W624 coordinates FAD.

This sequence belongs to the NADPH-dependent diflavin oxidoreductase NDOR1 family. In the N-terminal section; belongs to the flavodoxin family. The protein in the C-terminal section; belongs to the flavoprotein pyridine nucleotide cytochrome reductase family. In terms of assembly, interacts with DRE2; as part of the cytosolic iron-sulfur (Fe-S) protein assembly (CIA) machinery. FAD is required as a cofactor. The cofactor is FMN.

The protein localises to the cytoplasm. It is found in the mitochondrion. It catalyses the reaction 2 oxidized [2Fe-2S]-[protein] + NADPH = 2 reduced [2Fe-2S]-[protein] + NADP(+) + H(+). Its function is as follows. NADPH-dependent reductase which is a central component of the cytosolic iron-sulfur (Fe-S) protein assembly (CIA) machinery. Transfers electrons from NADPH via its FAD and FMN prosthetic groups to the [2Fe-2S] cluster of DRE2, another key component of the CIA machinery. In turn, this reduced cluster provides electrons for assembly of cytosolic iron-sulfur cluster proteins. Positively controls H(2)O(2)-induced cell death. This Kluyveromyces lactis (strain ATCC 8585 / CBS 2359 / DSM 70799 / NBRC 1267 / NRRL Y-1140 / WM37) (Yeast) protein is NADPH-dependent diflavin oxidoreductase 1.